A 374-amino-acid chain; its full sequence is MIVAFCLYKYFPFGGLQRDFMRIASTVAARGHHVRVYTQSWEGDCPKAFELIQVPVKSHTNHGRNAEYYAWVQNHLKEHPADRVVGFNKMPGLDVYFAADVCYAEKVAQEKGFLYRLTSRYRHYAAFERATFEQGKSTKLMMLTDKQIADFQKHYQTEPERFQILPPGIYPDRKYSEQIPNSREIYRQKNGIKEQQNLLLQVGSDFGRKGVDRSIEALASLPESLRHNTLLFVVGQDKPRKFEALAEKLGVRSNVHFFSGRNDVSELMAAADLLLHPAYQEAAGIVLLEAITAGLPVLTTAVCGYAHYIADANCGTVIAEPFSQEQLNEVLRKALTQSPLRMAWAENARHYADTQDLYSLPEKAADIITGGLDG.

UDP-alpha-D-glucose contacts are provided by Gly-15 and Asp-19. Residues 103 to 132 (YAEKVAQEKGFLYRLTSRYRHYAAFERATF) form a membrane-interacting region region. Arg-173, Arg-208, Lys-209, Arg-261, Glu-281, Ala-283, Gly-284, Ile-285, Val-286, and Glu-289 together coordinate UDP-alpha-D-glucose.

It belongs to the glycosyltransferase group 1 family. Glycosyltransferase 4 subfamily.

Its subcellular location is the cell inner membrane. The protein operates within bacterial outer membrane biogenesis; LPS core biosynthesis. Its activity is regulated as follows. Inhibited by divalent metal ions such as Mg(2+), Mn(2+), Ca(2+), Zn(2+), Co(2+), Ni(2+) and Cu(2+). In terms of biological role, glucosyltransferase involved in the biosynthesis of the core oligosaccharide region of lipopolysaccharide (LPS). Catalyzes the addition of the first outer-core glucose from UDP-glucose to the inner-core heptose II. Cannot use other sugar donors, such as UDP-galactose, UDP-glucuronic acid, UDP-galacuronic acid, GDP-mannose, ADP-glucose and GDP-glucose. In the absence of a lipid acceptor, can slowly hydrolyze UDP-glucose. The sequence is that of Lipopolysaccharide glucosyltransferase WaaG from Escherichia coli (strain K12).